A 483-amino-acid polypeptide reads, in one-letter code: Altronate oxidoreductase (483 aa).

NAD(+) is bound at residue 18–29 (IIQFGEGNFLRA).

Belongs to the mannitol dehydrogenase family. UxaB subfamily.

The catalysed reaction is D-altronate + NAD(+) = keto-D-tagaturonate + NADH + H(+). It participates in carbohydrate metabolism; pentose and glucuronate interconversion. In Escherichia coli (strain 55989 / EAEC), this protein is Altronate oxidoreductase.